The primary structure comprises 205 residues: MPLLCALLRSRLQPSLLRSLTLTSAQSLSCGGSRGVRTWSARTGPGACADPAVSVSKRARAEDDASLRFVRLSEHATAPTRGSARAAGYDLYSAYDYTIPSMEKALVKTDIQIAVPSGCYGRVAPRSGLAVKHFIDVGAGVIDEDYRGNVGVVLFNFGKEKFEVKKGDRIAQLICERILYPDLEEVQTLDNTERGSGGFGSTGKN.

A Phosphoserine modification is found at Ser-54. Substrate contacts are provided by residues 126-128 (RSG), 140-143 (GVID), Gly-151, and 199-200 (FG).

This sequence belongs to the dUTPase family. Homotrimer. Mg(2+) is required as a cofactor. Expressed in all tissues examined. Higher levels in heart and kidney.

Its subcellular location is the cytoplasm. It is found in the nucleus. The enzyme catalyses dUTP + H2O = dUMP + diphosphate + H(+). Its pathway is pyrimidine metabolism; dUMP biosynthesis; dUMP from dCTP (dUTP route): step 2/2. Functionally, catalyzes the cleavage of 2'-deoxyuridine 5'-triphosphate (dUTP) into 2'-deoxyuridine 5'-monophosphate (dUMP) and inorganic pyrophosphate and through its action efficiently prevents uracil misincorporation into DNA and at the same time provides dUMP, the substrate for de novo thymidylate biosynthesis. Inhibits peroxisome proliferator-activated receptor (PPAR) activity by binding of its N-terminal to PPAR, preventing the latter's dimerization with retinoid X receptor. Essential for embryonic development. The protein is Deoxyuridine 5'-triphosphate nucleotidohydrolase (Dut) of Rattus norvegicus (Rat).